The primary structure comprises 157 residues: Aspartate carbamoyltransferase regulatory chain (157 aa).

Zn(2+) is bound by residues Cys108, Cys113, Cys138, and Cys141.

The protein belongs to the PyrI family. In terms of assembly, contains catalytic and regulatory chains. Zn(2+) is required as a cofactor.

Involved in allosteric regulation of aspartate carbamoyltransferase. The protein is Aspartate carbamoyltransferase regulatory chain of Ignicoccus hospitalis (strain KIN4/I / DSM 18386 / JCM 14125).